We begin with the raw amino-acid sequence, 822 residues long: Putative ESX-1 scaffolding and assembly protein SaeB (822 aa).

May be involved in assembly of the ESX-1 / type VII specialized secretion system (T7SS), which exports several proteins including EsxA and EsxB. Involved in DNA conjugation in recipient (MDK8) but not donor (mc(2)155) strain. This chain is Putative ESX-1 scaffolding and assembly protein SaeB, found in Mycolicibacterium smegmatis (strain ATCC 700084 / mc(2)155) (Mycobacterium smegmatis).